Reading from the N-terminus, the 406-residue chain is MTNAQPTELISLPSELLCHLFTYLPQRQLITEIPLVCRRFNTILNDDKFWSRRIRTEQKVRLPDCELKHPEYEPKKSFYAMHRQRDRWRAWETQTVITAPGHSATVDSVMLFENNNKQFCLSGSRDRTIRLWSIENARNGEDTEQNPWTVAKDDTAHSGWIWNMAQESTSTNFYTTSWDSTVKSWHITDNGALQNLNSVNVGSAAQCISCSGNENEVVCTTFAKRVAVIDSRTFQVVADHKLHKRAVIALAVQGDKIFTSGEDRLMMMVDRRNFSKPVLFEYSPTAYKSCLSLQCNQLLTSTSDGKVKLYDANNFNVLQTYSVGSYTRQSFLEHGAHLIMARSLKRNYTFSIYSPGTRSQQWCASHELAAEPAKFDYSPSSRTLAIGNGDSSILFCLPASAPDQEN.

The 48-residue stretch at 6–53 (PTELISLPSELLCHLFTYLPQRQLITEIPLVCRRFNTILNDDKFWSRR) folds into the F-box domain. WD repeat units lie at residues 101–142 (GHSA…NGED), 156–195 (AHSG…ALQN), 242–279 (LHKR…KPVL), 281–320 (EYSP…VLQT), and 365–406 (SHEL…DQEN).

May interact with the SCF ubiquitin ligase complex component skr-1. In terms of tissue distribution, expressed in several neurons in the head, tail and ventral cord, but absent in touch receptor neurons in adults. Expressed in GABAergic and cholinergic motor neurons.

It localises to the perikaryon. Functionally, plays a role in mechanosensory transduction (touch sensitivity), touch receptor neuron development and synapse formation. Regulates expression of the protein snb-1 and the distribution of synaptic vesicles at synapses to promote synaptic transmission at the neuromuscular junctions of GABAergic motor neurons. This is F-box/WD repeat-containing protein mec-15 from Caenorhabditis elegans.